A 191-amino-acid polypeptide reads, in one-letter code: Molybdenum cofactor guanylyltransferase (191 aa).

Residues 13–15, Lys-26, Asp-72, and Asp-102 each bind GTP; that span reads LAG. Asp-102 provides a ligand contact to Mg(2+).

It belongs to the MobA family. Monomer. Mg(2+) serves as cofactor.

It is found in the cytoplasm. It catalyses the reaction Mo-molybdopterin + GTP + H(+) = Mo-molybdopterin guanine dinucleotide + diphosphate. Its function is as follows. Transfers a GMP moiety from GTP to Mo-molybdopterin (Mo-MPT) cofactor (Moco or molybdenum cofactor) to form Mo-molybdopterin guanine dinucleotide (Mo-MGD) cofactor. In Pseudomonas putida (Arthrobacter siderocapsulatus), this protein is Molybdenum cofactor guanylyltransferase.